Consider the following 147-residue polypeptide: UPF0306 protein YhbP (147 aa).

The protein belongs to the UPF0306 family.

In Shigella sonnei (strain Ss046), this protein is UPF0306 protein YhbP.